A 513-amino-acid polypeptide reads, in one-letter code: Nuclear pore complex protein NUP58 (513 aa).

Disordered regions lie at residues Q28 to Q62, S217 to Q239, and R356 to R513. Over residues N30–P50 the composition is skewed to polar residues. Low complexity-rich tracts occupy residues Q51–Q62 and S217–G227. The segment covering R356 to A365 has biased composition (basic and acidic residues). Over residues S377–Q386 the composition is skewed to low complexity. The segment covering S393–G427 has biased composition (polar residues). Residues P428–F446 are compositionally biased toward low complexity. A run of 6 repeats spans residues F446–G447, F458–G459, F466–G467, F473–G474, F486–G487, and F497–G498. Residues F446–G498 form a 6 X 2 AA repeats of F-G region. Residues P452–S484 are compositionally biased toward polar residues. Residues S504–R513 are compositionally biased toward basic residues.

It belongs to the NUP58 family. Part of the nuclear pore complex (NPC). The NPC has an eight-fold symmetrical structure comprising a central transport channel and two rings, the cytoplasmic and nuclear rings, to which eight filaments are attached. The cytoplasmic filaments have loose ends, while the nuclear filaments are joined in a distal ring, forming a nuclear basket. NPCs are highly dynamic in configuration and composition, and can be devided in 3 subcomplexes, the NUP62 subcomplex, the NUP107-160 subcomplex and the NUP93 subcomplex, containing approximately 30 different nucleoporin proteins. Interacts with GAI, NUP62, SKP1A and SKP1B. Ubiquitous. Higherst expression in cauline leaves, lowest in roots.

The protein localises to the nucleus envelope. The protein resides in the nucleus. It localises to the nuclear pore complex. Involved in nucleocytoplasmic trafficking. May have regulatory roles in the gibberellin pathway, in auxin signaling and in light perception. This is Nuclear pore complex protein NUP58 from Arabidopsis thaliana (Mouse-ear cress).